The sequence spans 305 residues: MSAALPITAVPACASGWQAMLDLRFGHRAGQGSVLSHARHSGPLRVQKPLHPEGPGICHAVLLHPPGGVAGGDQLQIDVTVEPGAHALLTTPGATRWYKSQGRPAAQRVRLRVEEGAILEWLPQENMLFAGADATMALDLDLAPGARAIGWDAVVLGRYGAGEHWNHTGAAPTAAARLQLHNRLACGGRPLWLEQGELHAGHALLSSPVAWAGLPIQASLWAVAPEPLAAMEPLSEQLAASLPWSDEVRAGASLLAGQGGAPSVLLLRVLARRMEAARAVLHEGWRLLRPALLNQQARPPRLWAT.

Belongs to the UreD family. UreD, UreF and UreG form a complex that acts as a GTP-hydrolysis-dependent molecular chaperone, activating the urease apoprotein by helping to assemble the nickel containing metallocenter of UreC. The UreE protein probably delivers the nickel.

It localises to the cytoplasm. Functionally, required for maturation of urease via the functional incorporation of the urease nickel metallocenter. The sequence is that of Urease accessory protein UreD from Delftia acidovorans (strain DSM 14801 / SPH-1).